We begin with the raw amino-acid sequence, 302 residues long: Ribosomal RNA small subunit methyltransferase A (302 aa).

Residues His15, Leu17, Gly42, Glu64, Asp89, and Asn109 each coordinate S-adenosyl-L-methionine. Positions 275–302 are disordered; that stretch reads DAASADGHDHGDGSGQGESSPGGARDQI.

This sequence belongs to the class I-like SAM-binding methyltransferase superfamily. rRNA adenine N(6)-methyltransferase family. RsmA subfamily.

It is found in the cytoplasm. It carries out the reaction adenosine(1518)/adenosine(1519) in 16S rRNA + 4 S-adenosyl-L-methionine = N(6)-dimethyladenosine(1518)/N(6)-dimethyladenosine(1519) in 16S rRNA + 4 S-adenosyl-L-homocysteine + 4 H(+). Its function is as follows. Specifically dimethylates two adjacent adenosines (A1518 and A1519) in the loop of a conserved hairpin near the 3'-end of 16S rRNA in the 30S particle. May play a critical role in biogenesis of 30S subunits. This is Ribosomal RNA small subunit methyltransferase A from Parasynechococcus marenigrum (strain WH8102).